The primary structure comprises 321 residues: Transaldolase (321 aa).

Lys-132 serves as the catalytic Schiff-base intermediate with substrate.

Belongs to the transaldolase family. Type 1 subfamily. Homodimer.

It is found in the cytoplasm. The catalysed reaction is D-sedoheptulose 7-phosphate + D-glyceraldehyde 3-phosphate = D-erythrose 4-phosphate + beta-D-fructose 6-phosphate. It participates in carbohydrate degradation; pentose phosphate pathway; D-glyceraldehyde 3-phosphate and beta-D-fructose 6-phosphate from D-ribose 5-phosphate and D-xylulose 5-phosphate (non-oxidative stage): step 2/3. Transaldolase is important for the balance of metabolites in the pentose-phosphate pathway. This Rhizobium leguminosarum bv. trifolii (strain WSM2304) protein is Transaldolase.